The chain runs to 377 residues: PqqA peptide cyclase (377 aa).

A Radical SAM core domain is found at 12-228; it reads FGIPLAVLLE…EAARERLKGQ (217 aa). The [4Fe-4S] cluster site is built by Cys26, Cys30, and Cys33.

The protein belongs to the radical SAM superfamily. PqqE family. Interacts with PqqD. The interaction is necessary for activity of PqqE. It depends on [4Fe-4S] cluster as a cofactor.

The catalysed reaction is [PQQ precursor protein] + S-adenosyl-L-methionine = E-Y cross-linked-[PQQ precursor protein] + 5'-deoxyadenosine + L-methionine + H(+). It functions in the pathway cofactor biosynthesis; pyrroloquinoline quinone biosynthesis. Its function is as follows. Catalyzes the cross-linking of a glutamate residue and a tyrosine residue in the PqqA protein as part of the biosynthesis of pyrroloquinoline quinone (PQQ). This is PqqA peptide cyclase from Rhodopseudomonas palustris (strain ATCC BAA-98 / CGA009).